The primary structure comprises 282 residues: Bis(5'-nucleosyl)-tetraphosphatase, symmetrical (282 aa).

It belongs to the Ap4A hydrolase family.

The enzyme catalyses P(1),P(4)-bis(5'-adenosyl) tetraphosphate + H2O = 2 ADP + 2 H(+). Hydrolyzes diadenosine 5',5'''-P1,P4-tetraphosphate to yield ADP. The protein is Bis(5'-nucleosyl)-tetraphosphatase, symmetrical of Salmonella agona (strain SL483).